The following is a 180-amino-acid chain: Outer-membrane lipoprotein LolB (180 aa).

An N-terminal signal peptide occupies residues Met1–Gly16. A lipid anchor (N-palmitoyl cysteine) is attached at Cys17. Cys17 is lipidated: S-diacylglycerol cysteine.

It belongs to the LolB family. As to quaternary structure, monomer.

The protein localises to the cell outer membrane. Plays a critical role in the incorporation of lipoproteins in the outer membrane after they are released by the LolA protein. The chain is Outer-membrane lipoprotein LolB from Chromobacterium violaceum (strain ATCC 12472 / DSM 30191 / JCM 1249 / CCUG 213 / NBRC 12614 / NCIMB 9131 / NCTC 9757 / MK).